The following is a 132-amino-acid chain: Fatty acid-binding protein, brain (132 aa).

Position 2 is an N-acetylvaline (V2). R127–Y129 is a binding site for a fatty acid.

Belongs to the calycin superfamily. Fatty-acid binding protein (FABP) family. As to quaternary structure, monomer.

Its subcellular location is the cytoplasm. FABPs are thought to play a role in the intracellular transport of long-chain fatty acids and their acyl-CoA esters. Binds oleic and palmitic acids but not palmitoyl CoA. The chain is Fatty acid-binding protein, brain (FABP7) from Bos taurus (Bovine).